The primary structure comprises 329 residues: Diaminopimelate epimerase (329 aa).

Substrate is bound by residues Asn14 and Asn73. Residue Cys82 is the Proton donor of the active site. Residues 83–84 (GN), Asn170, Asn206, and 224–225 (ER) contribute to the substrate site. Cys233 functions as the Proton acceptor in the catalytic mechanism. 234-235 (GT) contributes to the substrate binding site.

It belongs to the diaminopimelate epimerase family. In terms of assembly, homodimer.

The protein localises to the cytoplasm. The catalysed reaction is (2S,6S)-2,6-diaminopimelate = meso-2,6-diaminopimelate. Its pathway is amino-acid biosynthesis; L-lysine biosynthesis via DAP pathway; DL-2,6-diaminopimelate from LL-2,6-diaminopimelate: step 1/1. Functionally, catalyzes the stereoinversion of LL-2,6-diaminopimelate (L,L-DAP) to meso-diaminopimelate (meso-DAP), a precursor of L-lysine and an essential component of the bacterial peptidoglycan. This is Diaminopimelate epimerase from Listeria monocytogenes serovar 1/2a (strain ATCC BAA-679 / EGD-e).